The primary structure comprises 458 residues: MSITKEFDTITAISTPLGEGAIGIVRLSGTDALAIAQSVFKGKNLEQVASHTINYGHIIDPKTGTIIDEVMVSVMLAPKTFTRENVVEINTHGGIAVTNEILQLLIRQGARMAEPGEFTKRAFLNGRVDLTQAEAVMDIIRAKTDKAMTIAVKQLDGSLSQLINDTRQEILNTLAQVEVNIDYPEYDDVEEMTTALLREKTQEFQSLLENLLRTAKRGKILREGLSTAIIGRPNVGKSSLLNNLLREDKAIVTDIAGTTRDVIEEYVNIKGVPLKLVDTAGIRETDDLVEQIGVERSKKALQEADLVLLVLNASEKLTDQDRALLNLSQDSNRIILLNKTDLEQKIELEQLPDDYIPISVLTNQNINLIEDRINQLFFDNAGLVEQDATYLSNARHISLIEKAVQSLEAVNDGLALGMPVDLLQVDLTRTWEILGEITGDAAPDELITQLFSQFCLGK.

Residues Arg-26, Glu-88, and Arg-127 each coordinate (6S)-5-formyl-5,6,7,8-tetrahydrofolate. Positions Gly-224–Phe-378 constitute a TrmE-type G domain. Asn-234 is a K(+) binding site. GTP-binding positions include Asn-234–Ser-239, Thr-253–Thr-259, and Asp-278–Gly-281. Residue Ser-238 participates in Mg(2+) binding. Thr-253, Ile-255, and Thr-258 together coordinate K(+). Thr-259 is a Mg(2+) binding site. Lys-458 provides a ligand contact to (6S)-5-formyl-5,6,7,8-tetrahydrofolate.

The protein belongs to the TRAFAC class TrmE-Era-EngA-EngB-Septin-like GTPase superfamily. TrmE GTPase family. As to quaternary structure, homodimer. Heterotetramer of two MnmE and two MnmG subunits. The cofactor is K(+).

The protein resides in the cytoplasm. Functionally, exhibits a very high intrinsic GTPase hydrolysis rate. Involved in the addition of a carboxymethylaminomethyl (cmnm) group at the wobble position (U34) of certain tRNAs, forming tRNA-cmnm(5)s(2)U34. This is tRNA modification GTPase MnmE from Streptococcus pyogenes serotype M18 (strain MGAS8232).